The following is a 234-amino-acid chain: Short neuropeptide F (234 aa).

The N-terminal stretch at 1–22 (MYRINLTTFTLLLVLAVGSLMS) is a signal peptide. A propeptide spanning residues 23–56 (ESLHPSDGAINDLYEYLLQREYAAPVSYADHQIK) is cleaved from the precursor. Residues phenylalanine 69 and phenylalanine 101 each carry the phenylalanine amide modification. A Tryptophan amide modification is found at tryptophan 132. At phenylalanine 165 the chain carries Phenylalanine amide. Residues 181–190 (TTGQQAQPAN) are compositionally biased toward polar residues. The interval 181 to 234 (TTGQQAQPANEASEKRAPTQRLRWGRSDPALAKDSSEDKALDVEESENTNADDK) is disordered. Tryptophan 204 is modified (tryptophan amide). Positions 207–234 (SDPALAKDSSEDKALDVEESENTNADDK) are excised as a propeptide.

Belongs to the NPY family. In terms of tissue distribution, expressed in all body parts of larva, pupae and adults.

The protein resides in the secreted. In terms of biological role, plays a role in controlling food intake and regulating body size. The protein is Short neuropeptide F of Anopheles gambiae (African malaria mosquito).